The chain runs to 128 residues: Riboflavin kinase (128 aa).

12 to 17 (GKGEGK) contacts CDP. Residues Thr41 and Asn43 each contribute to the Mg(2+) site. FMN-binding residues include Thr97 and Glu105. Residue 110–113 (IKLR) participates in CDP binding.

The protein belongs to the archaeal riboflavin kinase family. Mg(2+) is required as a cofactor.

The catalysed reaction is riboflavin + CTP = CDP + FMN + H(+). Its pathway is cofactor biosynthesis; FMN biosynthesis; FMN from riboflavin (CTP route): step 1/1. In terms of biological role, catalyzes the CTP-dependent phosphorylation of riboflavin (vitamin B2) to form flavin mononucleotide (FMN). The polypeptide is Riboflavin kinase (Methanococcus aeolicus (strain ATCC BAA-1280 / DSM 17508 / OCM 812 / Nankai-3)).